A 341-amino-acid polypeptide reads, in one-letter code: tRNA N6-adenosine threonylcarbamoyltransferase (341 aa).

Fe cation-binding residues include His-111 and His-115. Residues Leu-134–Gly-138, Asp-167, Gly-180, and Asn-276 each bind substrate. Residue Asp-304 participates in Fe cation binding.

It belongs to the KAE1 / TsaD family. Fe(2+) serves as cofactor.

The protein localises to the cytoplasm. It catalyses the reaction L-threonylcarbamoyladenylate + adenosine(37) in tRNA = N(6)-L-threonylcarbamoyladenosine(37) in tRNA + AMP + H(+). Its function is as follows. Required for the formation of a threonylcarbamoyl group on adenosine at position 37 (t(6)A37) in tRNAs that read codons beginning with adenine. Is involved in the transfer of the threonylcarbamoyl moiety of threonylcarbamoyl-AMP (TC-AMP) to the N6 group of A37, together with TsaE and TsaB. TsaD likely plays a direct catalytic role in this reaction. The chain is tRNA N6-adenosine threonylcarbamoyltransferase from Pseudomonas syringae pv. syringae (strain B728a).